A 783-amino-acid polypeptide reads, in one-letter code: MKKNYYSLISFSIFTALYSTAGFADLQQQCLAGVPQFSGEVVKGNANEMPVYIEADKAELNHPTKGVYQGNVDIKQGNRHLITETAEIIQSGQDENVQRYAYAKGGFDYKDNIINLTGDDAKVHLNTKDTDVKNADYQFVGRQGRGSAQSAEVREDYRLLNNATFTSCLPNDNSWQIEAKEMKQYIKEEYAEMWHARFKVAGVPVFYTPYLQLPIGDRRRSGLLIPSAGSSSRDGYWYSQPIYWNIAPNYDATFTPKYMTHRGWQMNGEFRYLNEIGEGKIAGEYLGDDRYKDYIGDNKSRHLFYWAHNAKLFDNWRLNVNYTKVSDKRYFSDFDSDYGSSTDGYATQTARLAYFQPNYNFAISAKQYQVFDEVSVGPYKALPQIDFNYYQNDLAQGLLDFKLFAQAVRFENDSTLMPTAWRYHAEPSLNLPMSNQYGSLNVETKLYATHYEQRKGSSARAEDIDRSVNRMIPQIKVDLQTVLASDKTFVDGFTQTLEPHLQYLYRPYRDQSNIGSKRNTEYLGYGYDSALLQQDYFSLFRDRRYSGLDRIASANQFTLGGTTRFYDEQANERFNLSLGQILYLNDSRIDNNSDHSTSGRASSWALESNWKLSDQWNWRGSYQYDTRLNETSLANTTLEYNPEKNNLIQLNYRYASQAYIDQNLTSGANRYNQDIKQIGTTIAWEVSDNWVLVGRYYHDIALNKLVEEYAGIKYNTCCWSVGVGARRHLVSKSNYTYSANKDTIYDNSFGITFELRGLGNEQHSGIVDMLDKGMLPYVKPFNL.

Positions 1–24 (MKKNYYSLISFSIFTALYSTAGFA) are cleaved as a signal peptide.

The protein belongs to the LptD family. As to quaternary structure, component of the lipopolysaccharide transport and assembly complex. Interacts with LptE and LptA.

It is found in the cell outer membrane. Functionally, together with LptE, is involved in the assembly of lipopolysaccharide (LPS) at the surface of the outer membrane. This chain is LPS-assembly protein LptD, found in Mannheimia succiniciproducens (strain KCTC 0769BP / MBEL55E).